Here is a 207-residue protein sequence, read N- to C-terminus: Guanylate kinase (207 aa).

The region spanning 4 to 184 is the Guanylate kinase-like domain; the sequence is GTLYIVSAPS…ALTDLKTIIR (181 aa). Residue 11–18 coordinates ATP; sequence APSGAGKS.

Belongs to the guanylate kinase family.

It is found in the cytoplasm. It catalyses the reaction GMP + ATP = GDP + ADP. Essential for recycling GMP and indirectly, cGMP. The protein is Guanylate kinase of Escherichia coli O6:K15:H31 (strain 536 / UPEC).